The following is a 212-amino-acid chain: Ropporin-1 (212 aa).

Residues 12–43 (PELPELLKQFTKDAIRTQPPDLIQWAAEYFGA) form the RIIa domain. Position 56 is a phosphoserine (serine 56). Residues 209-212 (VRLE) are interaction with RHPN1.

Belongs to the ropporin family. As to quaternary structure, homodimer. Interacts with AKAP3. May interact with SPA17. Interacts with RHPN1. Interacts with FSCB; the interaction increases upon spermatozoa capacitation conditions. Interacts with CFAP61. In terms of processing, sumoylated, sumoylation decreases upon spermatozoa capacitation conditions. In terms of tissue distribution, testis-specific. Present in the most inner parts of seminiferous tubules (at protein level).

It localises to the cell projection. The protein resides in the cilium. The protein localises to the flagellum. Its function is as follows. Important for male fertility. With ROPN1L, involved in fibrous sheath integrity and sperm motility, plays a role in PKA-dependent signaling processes required for spermatozoa capacitation. The protein is Ropporin-1 (Ropn1) of Mus musculus (Mouse).